A 346-amino-acid polypeptide reads, in one-letter code: Elongation factor Ts (346 aa).

Residues 80–83 (TDFV) are involved in Mg(2+) ion dislocation from EF-Tu.

This sequence belongs to the EF-Ts family.

Its subcellular location is the cytoplasm. Its function is as follows. Associates with the EF-Tu.GDP complex and induces the exchange of GDP to GTP. It remains bound to the aminoacyl-tRNA.EF-Tu.GTP complex up to the GTP hydrolysis stage on the ribosome. In Streptococcus agalactiae serotype Ia (strain ATCC 27591 / A909 / CDC SS700), this protein is Elongation factor Ts.